Here is a 164-residue protein sequence, read N- to C-terminus: Lipoprotein signal peptidase (164 aa).

The next 4 membrane-spanning stretches (helical) occupy residues 12 to 32, 42 to 62, 70 to 90, and 102 to 122; these read WLWL…LILQ, LFPS…SFLA, WFFA…MYRS, and ALII…GFVV. Catalysis depends on residues Asp-123 and Asp-141. Residues 137 to 157 form a helical membrane-spanning segment; it reads FNLADTAICVGAALIVLEGFL.

The protein belongs to the peptidase A8 family.

The protein localises to the cell inner membrane. It catalyses the reaction Release of signal peptides from bacterial membrane prolipoproteins. Hydrolyzes -Xaa-Yaa-Zaa-|-(S,diacylglyceryl)Cys-, in which Xaa is hydrophobic (preferably Leu), and Yaa (Ala or Ser) and Zaa (Gly or Ala) have small, neutral side chains.. Its pathway is protein modification; lipoprotein biosynthesis (signal peptide cleavage). In terms of biological role, this protein specifically catalyzes the removal of signal peptides from prolipoproteins. This chain is Lipoprotein signal peptidase, found in Shigella flexneri serotype 5b (strain 8401).